Reading from the N-terminus, the 781-residue chain is Probable serine/threonine-protein kinase C70.05c (781 aa).

Disordered stretches follow at residues 1 to 315 (MPSD…PLVS) and 368 to 417 (YSGK…TNIS). Positions 21–31 (ESPSSRSIGSG) are enriched in low complexity. The segment covering 43–63 (FKNSFLSRKNSSQIKSPSDYK) has biased composition (polar residues). Over residues 64 to 73 (SSAHEQRVNH) the composition is skewed to basic and acidic residues. The span at 74–92 (TTDSMAHVPGNNSPLQTPQ) shows a compositional bias: polar residues. Residue S94 is modified to Phosphoserine. Residues 112-121 (SRHHKPHHSG) show a composition bias toward basic residues. 3 stretches are compositionally biased toward polar residues: residues 136 to 146 (SNANSPTSESP), 161 to 195 (KNTSSHPSSPVNGKSSDIHKSQSYQHLKNSPPNSR), and 206 to 228 (NSASHNLGSTKSPNGNAKESLSR). The residue at position 253 (S253) is a Phosphoserine. The span at 272–304 (PLTASPTPSSPTGTPNSMSKSPSLSSLASTGAS) shows a compositional bias: low complexity. Residues 379 to 406 (NVGSSANTAPNSPTSANSSEGNQGNGPT) show a composition bias toward polar residues. The Protein kinase domain occupies 432–742 (AKRVVPRLSA…AQEALNLPFV (311 aa)). ATP-binding positions include 452 to 460 (MGSGATAVI) and K480. D584 functions as the Proton acceptor in the catalytic mechanism.

Belongs to the protein kinase superfamily. Ser/Thr protein kinase family.

The protein resides in the cytoplasm. It catalyses the reaction L-seryl-[protein] + ATP = O-phospho-L-seryl-[protein] + ADP + H(+). The enzyme catalyses L-threonyl-[protein] + ATP = O-phospho-L-threonyl-[protein] + ADP + H(+). The chain is Probable serine/threonine-protein kinase C70.05c from Schizosaccharomyces pombe (strain 972 / ATCC 24843) (Fission yeast).